Reading from the N-terminus, the 485-residue chain is tRNA sulfurtransferase (485 aa).

In terms of domain architecture, THUMP spans 61–165 (EELIALLQRI…DDKMMLVKAR (105 aa)). ATP contacts are provided by residues 183 to 184 (LI), Lys265, Gly287, and Gln296. Residues Cys344 and Cys456 are joined by a disulfide bond. The 80-residue stretch at 404 to 483 (LSENEVILDI…FSNVRVFAKK (80 aa)) folds into the Rhodanese domain. Cys456 acts as the Cysteine persulfide intermediate in catalysis.

It belongs to the ThiI family.

It localises to the cytoplasm. It catalyses the reaction [ThiI sulfur-carrier protein]-S-sulfanyl-L-cysteine + a uridine in tRNA + 2 reduced [2Fe-2S]-[ferredoxin] + ATP + H(+) = [ThiI sulfur-carrier protein]-L-cysteine + a 4-thiouridine in tRNA + 2 oxidized [2Fe-2S]-[ferredoxin] + AMP + diphosphate. The catalysed reaction is [ThiS sulfur-carrier protein]-C-terminal Gly-Gly-AMP + S-sulfanyl-L-cysteinyl-[cysteine desulfurase] + AH2 = [ThiS sulfur-carrier protein]-C-terminal-Gly-aminoethanethioate + L-cysteinyl-[cysteine desulfurase] + A + AMP + 2 H(+). Its pathway is cofactor biosynthesis; thiamine diphosphate biosynthesis. In terms of biological role, catalyzes the ATP-dependent transfer of a sulfur to tRNA to produce 4-thiouridine in position 8 of tRNAs, which functions as a near-UV photosensor. Also catalyzes the transfer of sulfur to the sulfur carrier protein ThiS, forming ThiS-thiocarboxylate. This is a step in the synthesis of thiazole, in the thiamine biosynthesis pathway. The sulfur is donated as persulfide by IscS. The sequence is that of tRNA sulfurtransferase from Haemophilus influenzae (strain PittEE).